The primary structure comprises 212 residues: KxDL motif-containing protein CG10681 (212 aa).

The segment at 128 to 159 (RSSLAEEAEDDTEAQAKKTAETPAPAAAKPVL) is disordered. Positions 148 to 157 (ETPAPAAAKP) are enriched in low complexity.

It belongs to the KXD1 family.

This is KxDL motif-containing protein CG10681 from Drosophila melanogaster (Fruit fly).